We begin with the raw amino-acid sequence, 587 residues long: Prolycopene isomerase 2, chloroplastic (587 aa).

Residues 1–50 (MLCLSLNSSSTSPPKLPLHHSFSRRGIRSWVRSPCVQRKKLGFWSSPKAV) constitute a chloroplast transit peptide.

Belongs to the carotenoid/retinoid oxidoreductase family. CrtISO subfamily. The cofactor is NAD(+). It depends on NADP(+) as a cofactor. FAD serves as cofactor. As to expression, up-regulated in the flower buds and flower lip tissue, while it is weakly expressed in leaves.

It is found in the plastid. Its subcellular location is the chloroplast membrane. The enzyme catalyses 7,7',9,9'-tetra-cis-lycopene = all-trans-lycopene. It functions in the pathway carotenoid biosynthesis; lycopene biosynthesis. Carotene cis-trans-isomerase that converts 7,9,9'-tri-cis-neurosporene to 9'-cis-neurosporene and 7,9,9',7'-tetra-cis-lycopene (also known as prolycopene) into all-trans-lycopene. Isomerization requires redox-active components, suggesting that isomerization is achieved by a reversible redox reaction acting at specific double bonds. Isomerizes adjacent cis-double bonds at C7 and C9 pairwise into the trans-configuration, but is incapable of isomerizing single cis-double bonds at C9 and C9'. The protein is Prolycopene isomerase 2, chloroplastic (CRTISO2) of Oncidium hybrid cultivar (Orchid).